A 40-amino-acid chain; its full sequence is Proteinase inhibitor IIB (40 aa).

3 disulfide bridges follow: Cys2/Cys16, Cys6/Cys28, and Cys12/Cys38.

It belongs to the protease inhibitor I20 (potato type II proteinase inhibitor) family.

It localises to the secreted. Inhibits chymotrypsin and subtilisin strongly. This Solanum tuberosum (Potato) protein is Proteinase inhibitor IIB.